The following is a 247-amino-acid chain: Carboxy-S-adenosyl-L-methionine synthase (247 aa).

S-adenosyl-L-methionine is bound by residues Tyr-39, 64 to 66 (GCS), 89 to 90 (DN), 117 to 118 (DI), Asn-132, and Arg-199.

This sequence belongs to the class I-like SAM-binding methyltransferase superfamily. Cx-SAM synthase family. In terms of assembly, homodimer.

The enzyme catalyses prephenate + S-adenosyl-L-methionine = carboxy-S-adenosyl-L-methionine + 3-phenylpyruvate + H2O. Its function is as follows. Catalyzes the conversion of S-adenosyl-L-methionine (SAM) to carboxy-S-adenosyl-L-methionine (Cx-SAM). The chain is Carboxy-S-adenosyl-L-methionine synthase from Salmonella enteritidis PT4 (strain P125109).